Consider the following 618-residue polypeptide: UvrABC system protein C (618 aa).

In terms of domain architecture, GIY-YIG spans 13-92 (DKPGVYLMKN…IKKYRPKYNI (80 aa)). A UVR domain is found at 204–239 (LDIVENFKLNMEKAAENLEFEKAAMLRDKINIIEKI).

Belongs to the UvrC family. In terms of assembly, interacts with UvrB in an incision complex.

The protein resides in the cytoplasm. Its function is as follows. The UvrABC repair system catalyzes the recognition and processing of DNA lesions. UvrC both incises the 5' and 3' sides of the lesion. The N-terminal half is responsible for the 3' incision and the C-terminal half is responsible for the 5' incision. The chain is UvrABC system protein C from Clostridium botulinum (strain Okra / Type B1).